The following is a 303-amino-acid chain: Putative CRISPR-associated endonuclease Cas1 2 (303 aa).

Glutamate 149 serves as a coordination point for Mn(2+).

The protein belongs to the CRISPR-associated endonuclease Cas1 family. As to quaternary structure, homodimer, forms a heterotetramer with a Cas2 homodimer. The cofactor is Mg(2+). It depends on Mn(2+) as a cofactor.

Functionally, CRISPR (clustered regularly interspaced short palindromic repeat), is an adaptive immune system that provides protection against mobile genetic elements (viruses, transposable elements and conjugative plasmids). CRISPR clusters contain sequences complementary to antecedent mobile elements and target invading nucleic acids. CRISPR clusters are transcribed and processed into CRISPR RNA (crRNA). Acts as a dsDNA endonuclease. Involved in the integration of spacer DNA into the CRISPR cassette. This Methanospirillum hungatei JF-1 (strain ATCC 27890 / DSM 864 / NBRC 100397 / JF-1) protein is Putative CRISPR-associated endonuclease Cas1 2.